Reading from the N-terminus, the 246-residue chain is MEEAKSQSLEEDFEGQATHTGPKGVINDWRKFKLESQDSDSIPPSKKEILRQMSSPQSRNGKDSKERVSRKMSIQEYELIHKEKEDENCLRKYRRQCMQDMHQKLSFGPRYGFVYELETGKQFLETIEKELKITTIVVHIYEDGIKGCDALNSSLTCLAAEYPIVKFCKIKASNTGAGDRFSLDVLPTLLIYKGGELISNFISVAEQFAEEFFAGDVESFLNEYGLLPEREVHVLEHTKIEEEDVE.

Residues 1-14 (MEEAKSQSLEEDFE) show a composition bias toward acidic residues. The segment at 1-70 (MEEAKSQSLE…GKDSKERVSR (70 aa)) is disordered. The region spanning 1–244 (MEEAKSQSLE…LEHTKIEEED (244 aa)) is the Phosducin domain. Basic and acidic residues predominate over residues 60–69 (NGKDSKERVS). Ser-73 is subject to Phosphoserine; by PKA. The thioredoxin fold stretch occupies residues 111 to 246 (YGFVYELETG…HTKIEEEDVE (136 aa)).

The protein belongs to the phosducin family. In terms of assembly, forms a complex with the beta and gamma subunits of the GTP-binding protein, transducin. Interacts with CRX. Light-induced changes in cyclic nucleotide levels modulate the phosphorylation of this protein by cAMP kinase.

It localises to the cytoplasm. The protein resides in the cytosol. Its subcellular location is the nucleus. It is found in the cell projection. The protein localises to the cilium. It localises to the photoreceptor outer segment. The protein resides in the photoreceptor inner segment. In terms of biological role, may participate in the regulation of visual phototransduction or in the integration of photoreceptor metabolism. Inhibits the transcriptional activation activity of the cone-rod homeobox CRX. The chain is Phosducin (PDC) from Homo sapiens (Human).